Here is a 399-residue protein sequence, read N- to C-terminus: Flavohemoprotein (399 aa).

Residues 1-138 enclose the Globin domain; that stretch reads MLAEKTRSII…IADIFITVEK (138 aa). At Thr22 the chain carries Phosphothreonine. Heme b is bound at residue His85. Catalysis depends on charge relay system residues Tyr95 and Glu137. The segment at 146–399 is reductase; that stretch reads WPGWKPFDIT…FGPKMSTVQV (254 aa). The FAD-binding FR-type domain maps to 147-264; sequence PGWKPFDITA…SAPAGDFAIN (118 aa). Residues Tyr189 and 207–210 each bind FAD; that span reads RHYS. 281–286 is an NADP(+) binding site; the sequence is GVGVTP. 389 to 392 contacts FAD; it reads PFGP.

It belongs to the globin family. Two-domain flavohemoproteins subfamily. This sequence in the C-terminal section; belongs to the flavoprotein pyridine nucleotide cytochrome reductase family. Requires FAD as cofactor. Heme b serves as cofactor.

The protein localises to the cytoplasm. The enzyme catalyses 2 nitric oxide + NADPH + 2 O2 = 2 nitrate + NADP(+) + H(+). The catalysed reaction is 2 nitric oxide + NADH + 2 O2 = 2 nitrate + NAD(+) + H(+). Its function is as follows. Is involved in NO detoxification in an aerobic process, termed nitric oxide dioxygenase (NOD) reaction that utilizes O(2) and NAD(P)H to convert NO to nitrate, which protects the fungus from various noxious nitrogen compounds. Therefore, plays a central role in the inducible response to nitrosative stress. In the presence of oxygen and NADH, it has NADH oxidase activity, which leads to the generation of superoxide and H(2)O(2). Under anaerobic conditions, it also exhibits nitric oxide reductase and FAD reductase activities. However, all these reactions are much lower than NOD activity. This is Flavohemoprotein (YHB1) from Saccharomyces cerevisiae (strain ATCC 204508 / S288c) (Baker's yeast).